Reading from the N-terminus, the 444-residue chain is Putative dipeptidase CPC735_015490 (444 aa).

The first 34 residues, 1 to 34 (MSQRTEHNGSWLRNAGSLLSVLACVAVLASPASA), serve as a signal peptide directing secretion. His-67, Asp-69, and Glu-178 together coordinate Zn(2+). The cysteines at positions 118 and 207 are disulfide-linked. His-205 serves as a coordination point for substrate. Residues His-250 and His-271 each coordinate Zn(2+). Substrate is bound by residues Arg-282 and Asp-342. An N-linked (GlcNAc...) asparagine glycan is attached at Asn-413.

The protein belongs to the metallo-dependent hydrolases superfamily. Peptidase M19 family. Zn(2+) serves as cofactor.

The enzyme catalyses an L-aminoacyl-L-amino acid + H2O = 2 an L-alpha-amino acid. Hydrolyzes a wide range of dipeptides. The sequence is that of Putative dipeptidase CPC735_015490 from Coccidioides posadasii (strain C735) (Valley fever fungus).